Reading from the N-terminus, the 354-residue chain is Guanine nucleotide-binding protein G(i) subunit alpha-1 (354 aa).

A lipid anchor (N-myristoyl glycine) is attached at glycine 2. The S-palmitoyl cysteine moiety is linked to residue cysteine 3. The G-alpha domain occupies 32-354 (REVKLLLLGA…KNNLKDCGLF (323 aa)). The segment at 35–48 (KLLLLGAGESGKST) is G1 motif. GTP is bound by residues 43–48 (ESGKST), 150–151 (DS), and 175–178 (LRTR). A Mg(2+)-binding site is contributed by serine 47. Positions 173–181 (DVLRTRVKT) are G2 motif. Threonine 181 is a Mg(2+) binding site. Positions 196 to 205 (FKMFDVGGQR) are G3 motif. GTP-binding positions include 200-204 (DVGGQ), 269-272 (NKKD), and alanine 326. Positions 265-272 (ILFLNKKD) are G4 motif. Residues 324–329 (TCATDT) form a G5 motif region.

The protein belongs to the G-alpha family. G(i/o/t/z) subfamily. In terms of assembly, heterotrimeric G proteins are composed of 3 units; alpha, beta and gamma. The alpha chain contains the guanine nucleotide binding site. Part of a spindle orientation complex at least composed of GNAI1, GPSM2 and NUMA1. Identified in complex with the beta subunit GNB1 and the gamma subunit GNG1. Identified in complex with the beta subunit GNB1 and the gamma subunit GNG2. Component of the TAS2R14-GNAI1 complex, consisting of TAS2R14, GNAI1, GNB1 and GNG2; within the complex interacts with TAS2R14; this complex plays a role in the perception of bitterness. GTP binding causes dissociation of the heterotrimer, liberating the individual subunits so that they can interact with downstream effector proteins. Interacts (GDP-bound form) with GPSM1; this inhibits guanine nucleotide exchange and GTP binding. Interacts (GDP-bound form) with GPSM2 (via GoLoco domains); this inhibits guanine nucleotide exchange. Interacts with RGS10; this strongly enhances GTP hydrolysis. Interacts with RGS1 and RGS16; this strongly enhances GTPase activity. Interacts with RGS4. Interacts with RGS12. Interacts (via active GTP- or inactive GDP-bound forms) with RGS14 (via RGS and GoLoco domains). Interacts with RGS3, RGS6, RGS7, RGS8, RGS17, RGS18 and RGS20 (in vitro). Interacts (GDP-bound form) with RIC8A (via C-terminus); promoting GNAI1 folding and association with the plasma membrane. Interacts (inactive GDP-bound form) with NUCB1 (via GBA motif); the interaction leads to activation of GNAI1. Interacts (inactive GDP-bound form) with CCDC88C/DAPLE (via GBA motif); the interaction leads to activation of GNAI1. Interacts (inactive GDP-bound form) with CCDC8A/GIV (via GBA motif). Post-translationally, myristoylation at Gly-2 is required for membrane anchoring before palmitoylation. In terms of processing, palmitoylation at Cys-3 varies with membrane lipid composition. Mainly expressed in the brain, lung and kidney.

The protein localises to the nucleus. Its subcellular location is the cytoplasm. It localises to the cell membrane. The protein resides in the cytoskeleton. It is found in the microtubule organizing center. The protein localises to the centrosome. Its subcellular location is the cell cortex. It localises to the membrane. It carries out the reaction GTP + H2O = GDP + phosphate + H(+). Its function is as follows. Guanine nucleotide-binding proteins (G proteins) function as transducers downstream of G protein-coupled receptors (GPCRs) in numerous signaling cascades. The alpha chain contains the guanine nucleotide binding site and alternates between an active, GTP-bound state and an inactive, GDP-bound state. Signaling by an activated GPCR promotes GDP release and GTP binding. The alpha subunit has a low GTPase activity that converts bound GTP to GDP, thereby terminating the signal. Both GDP release and GTP hydrolysis are modulated by numerous regulatory proteins. Signaling is mediated via effector proteins, such as adenylate cyclase. Inhibits adenylate cyclase activity of ADCY1, ADCY5 and ADCY6, leading to decreased intracellular cAMP levels. The inactive GDP-bound form prevents the association of RGS14 with centrosomes and is required for the translocation of RGS14 from the cytoplasm to the plasma membrane. Required for normal cytokinesis during mitosis. Required for cortical dynein-dynactin complex recruitment during metaphase. In Cavia porcellus (Guinea pig), this protein is Guanine nucleotide-binding protein G(i) subunit alpha-1 (GNAI1).